The following is a 295-amino-acid chain: 2-methylisocitrate lyase (295 aa).

Residue 45–47 coordinates substrate; it reads SGG. 2 residues coordinate Mg(2+): Asp-85 and Asp-87. Substrate contacts are provided by residues 123-124, Arg-158, Glu-188, 210-212, Arg-241, and Arg-270; these read CG and NIT.

The protein belongs to the isocitrate lyase/PEP mutase superfamily. Methylisocitrate lyase family. Homotetramer; dimer of dimers. Mg(2+) is required as a cofactor.

The catalysed reaction is (2S,3R)-3-hydroxybutane-1,2,3-tricarboxylate = pyruvate + succinate. It participates in organic acid metabolism; propanoate degradation. Functionally, involved in the catabolism of short chain fatty acids (SCFA) via the 2-methylcitrate cycle I (propionate degradation route). Catalyzes the thermodynamically favored C-C bond cleavage of (2R,3S)-2-methylisocitrate to yield pyruvate and succinate via an alpha-carboxy-carbanion intermediate. In Salmonella typhimurium (strain LT2 / SGSC1412 / ATCC 700720), this protein is 2-methylisocitrate lyase.